A 558-amino-acid polypeptide reads, in one-letter code: Dihydroxy-acid dehydratase (558 aa).

Position 78 (D78) interacts with Mg(2+). [2Fe-2S] cluster is bound at residue C119. Residues D120 and K121 each coordinate Mg(2+). An N6-carboxylysine modification is found at K121. C192 serves as a coordination point for [2Fe-2S] cluster. E445 contacts Mg(2+). S471 functions as the Proton acceptor in the catalytic mechanism.

The protein belongs to the IlvD/Edd family. In terms of assembly, homodimer. The cofactor is [2Fe-2S] cluster. Requires Mg(2+) as cofactor.

It carries out the reaction (2R)-2,3-dihydroxy-3-methylbutanoate = 3-methyl-2-oxobutanoate + H2O. The catalysed reaction is (2R,3R)-2,3-dihydroxy-3-methylpentanoate = (S)-3-methyl-2-oxopentanoate + H2O. It functions in the pathway amino-acid biosynthesis; L-isoleucine biosynthesis; L-isoleucine from 2-oxobutanoate: step 3/4. It participates in amino-acid biosynthesis; L-valine biosynthesis; L-valine from pyruvate: step 3/4. Functions in the biosynthesis of branched-chain amino acids. Catalyzes the dehydration of (2R,3R)-2,3-dihydroxy-3-methylpentanoate (2,3-dihydroxy-3-methylvalerate) into 2-oxo-3-methylpentanoate (2-oxo-3-methylvalerate) and of (2R)-2,3-dihydroxy-3-methylbutanoate (2,3-dihydroxyisovalerate) into 2-oxo-3-methylbutanoate (2-oxoisovalerate), the penultimate precursor to L-isoleucine and L-valine, respectively. The protein is Dihydroxy-acid dehydratase of Akkermansia muciniphila (strain ATCC BAA-835 / DSM 22959 / JCM 33894 / BCRC 81048 / CCUG 64013 / CIP 107961 / Muc).